The primary structure comprises 549 residues: Cytochrome c oxidase subunit 1 homolog, bacteroid (549 aa).

3 consecutive transmembrane segments (helical) span residues 12–32 (IGES…VIAA), 39–59 (PFAF…FCIV), and 87–107 (FSSF…LIIA). His131 contributes to the heme b binding site. 8 helical membrane passes run 132 to 152 (TSAV…FYVV), 168 to 188 (FVVV…LLGV), 201 to 221 (ADLW…ATII), 228 to 248 (IFVA…LHLG), 279 to 299 (GHNA…YYFI), 312 to 332 (LSII…PHHL), 344 to 364 (LGMT…INGL), and 382 to 402 (MLVV…MMSI). The Cu cation site is built by His280, His330, and His331. The heme b site is built by His418 and His420. Helical transmembrane passes span 423-443 (ALGW…PWAW), 458-478 (FWVA…SGIL), and 512-532 (AGGG…WMTV).

It belongs to the heme-copper respiratory oxidase family. Requires Cu(2+) as cofactor. Heme b serves as cofactor.

It is found in the cell membrane. The catalysed reaction is 4 Fe(II)-[cytochrome c] + O2 + 8 H(+)(in) = 4 Fe(III)-[cytochrome c] + 2 H2O + 4 H(+)(out). Its pathway is energy metabolism; oxidative phosphorylation. Its function is as follows. Cytochrome c oxidase is the component of the respiratory chain that catalyzes the reduction of oxygen to water. Subunits 1-3 form the functional core of the enzyme complex. Co I is the catalytic subunit of the enzyme. Electrons originating in cytochrome c or a quinol are transferred to the bimetallic center formed by a high-spin heme and copper B. The polypeptide is Cytochrome c oxidase subunit 1 homolog, bacteroid (fixN) (Bradyrhizobium diazoefficiens (strain JCM 10833 / BCRC 13528 / IAM 13628 / NBRC 14792 / USDA 110)).